The primary structure comprises 901 residues: Protein translocase subunit SecA (901 aa).

Residues Gln-87, 105–109 (GEGKT), and Asp-512 contribute to the ATP site. The Zn(2+) site is built by Cys-885, Cys-887, Cys-896, and His-897.

It belongs to the SecA family. Monomer and homodimer. Part of the essential Sec protein translocation apparatus which comprises SecA, SecYEG and auxiliary proteins SecDF-YajC and YidC. It depends on Zn(2+) as a cofactor.

Its subcellular location is the cell inner membrane. The protein resides in the cytoplasm. The catalysed reaction is ATP + H2O + cellular proteinSide 1 = ADP + phosphate + cellular proteinSide 2.. Its function is as follows. Part of the Sec protein translocase complex. Interacts with the SecYEG preprotein conducting channel. Has a central role in coupling the hydrolysis of ATP to the transfer of proteins into and across the cell membrane, serving both as a receptor for the preprotein-SecB complex and as an ATP-driven molecular motor driving the stepwise translocation of polypeptide chains across the membrane. This is Protein translocase subunit SecA from Salmonella typhi.